The chain runs to 346 residues: tRNA N6-adenosine threonylcarbamoyltransferase (346 aa).

The Fe cation site is built by His-111 and His-115. Residues 134–138 (LVSGG), Asp-167, Gly-180, and Asn-279 each bind substrate. Asp-307 is a Fe cation binding site.

Belongs to the KAE1 / TsaD family. Fe(2+) is required as a cofactor.

It localises to the cytoplasm. The enzyme catalyses L-threonylcarbamoyladenylate + adenosine(37) in tRNA = N(6)-L-threonylcarbamoyladenosine(37) in tRNA + AMP + H(+). Its function is as follows. Required for the formation of a threonylcarbamoyl group on adenosine at position 37 (t(6)A37) in tRNAs that read codons beginning with adenine. Is involved in the transfer of the threonylcarbamoyl moiety of threonylcarbamoyl-AMP (TC-AMP) to the N6 group of A37, together with TsaE and TsaB. TsaD likely plays a direct catalytic role in this reaction. This chain is tRNA N6-adenosine threonylcarbamoyltransferase, found in Burkholderia ambifaria (strain MC40-6).